The chain runs to 5255 residues: MVAKHSLENGVFHKMTENEKELILHFNNTKTDYPKNKTLHELFEEQAMKTPDHTALVFGAQRMTYRELNEKANQTARLLREKGIGRGSIAAIIADRSFEMIIGIIGILKAGGAYLPIDPETPKDRIAFMLSDTKAAVLLTQGKAADGIDCEADIVQLDREASDGFSKEPLSSVNDSGDTAYIIYTSGSTGTPKGVITPHYSVIRVVQNTNYIDITEDNVILQLSNYSFDGSVFDIFGALLNGASLVMIEKEALLNINRLGSAINEEKVSVMFITTALFNMIADIHVDCLSNLRKILFGGERASIPHVRKVLNHVGRDKLIHVYGPTESTVYATYYFINEIDDEAETIPIGSPLANTSVLIMDEAGKLVPIGVPGELCIAGDGLSKGYLNREELTAEKFIPHPFIPGERLYKTGDLAKWLPDGNIEFIGRIDHQVKIRGFRIELGEIESRLEMHEDINETIVTVREDEESRPYICAYITANREISLDELKGFLGEKLPEYMIPAYFVKLDKLPLTKNGKVDRKALPEPDRTAGAENEYEAPRNETEEKLAAVWQDVLHVEKAGIHDHFAQMGGHSLHAMELIAKIKEKMNVEIPLHQLFKLATIKELSAFIEANHQEDKGDTLVTRAADPENIHEIFPLTGIQLAYLVGRDETFEIGGVATNLTVEFEADVDLNRFQLTLQKLIDRHPILRTIVFENGTQKILEATQRYTIETQDLRGFTEEEINVRILEQREKMTSKIIDPSVWPLFELKTFMLPGEKKYFFLNVDPLICDDSSMKRLIREFKQLYENPGLQLPSLEYSFRDYVLASINFKQTSRYQKDQQYWLDKLDHFPSAPELPLKSDPAHVAKPSFKKFSTFLDGHTWNELKKKARHHHLTPTSVLCAAYAYILAYWSRQNHFAINLTVFNRIPFHPDVKNMIGDFTSLMLLDIHAEENMSSFWRFALNVQDTLLEALEHRHYDGVDVIRNIAKKNGMNKKAVMPIVFTSVLSENPDDSFDSLVDFDNIHFFSTRTSQVYIDNQVYEINGGLYITWDYVEQIFEHEVIESMFDQYIAVIQKAVSGEDVSTIQMNEKSRQMISAYNDTDQSFDAKPLHELFTGQVKHGPDRMALKHHDEVMTYQELDEKSNQVARFLIGKGVEKGDYIGVIGKRSLGTIVNLLAVLKTGAAYIPLDPDYPEERKAYIQSKSNCKFFISHDVYDKEHIERFSKAPVDRKVDLDDMAYVIFTSGSTGKPKGVQITHVPQRNTILDINEKFNVTEQDNIMGISSLCFDLSVYDVFGALSSGASLVIIDDQRDVFSLKETAEKERITIWNSVPAIMGMTADVYPDNELNHHLRLILLSGDWIPLQLPATIKKTFKNAEVISLGGATEGSIWSIYYPIQKVEEDWKSIPYGKPLANQKIYVLNQNKQLCPVGVEGELYIGGAGVASGYIHDQEKTEHSFIQHQELGYIYKTGDYGVLKEDGYVEFLGRKDSQVKIRGYRVEMGEIENTLVSHQEITKASVIDYTSPDGIKNLYAFVVAENAISQLDVKEFLQKTLPDYMIPAKFVQIEEIPLTVNGKVDKRTLHDLAEQHTADEGQRGGRMLPENETQAMLLEIWKDIFGLDSINLDVSYYEIGGDSLKAISIITEINKRMNVEMPISEIFKNDTIIALDHYLKNREESDMEHPIQKAREKEYYPTSPAQQRMYMLSMLENERGAYHIPMALLVEGRINAMQLENALKTFLQRHEILRTGFEIQNNELIQKIYENVDFRLEYECLDASITDQHALMEITSRYCKESIKPFDLSRPPLMRAKLIKIDDIRHILVINFHHIISDGVSQGILMNEILELYSNVPLPEVNVQYKDYVEWNHTFNQSAAMKKQEAYWLDVYRDIPSKLDFPYDYKRHHIDTFEGSSVFLEMERELSDHIRKLAKHNGTTLYTVMLSAYYVLLNKYTNQTDIVVGTAAAGRLHPDLQDVFGVFVNTLALRNEVDTSYSFKEFLQQTKERTIAAFDNSEYPFDDLIRKLNGVRESNRNPLFDTMFVLEDARMFTKQKGDVKLSPIIFELDNAKFDMIFNVLDFEQKIVLNIEYSTSLFKDETIQKIAEDYFRILEEVSENLDVALHQIDMISRQEKRTLLESFNHTKTAYPKGKAIHQLFEEQAKRIPDHTAVVFEDQKLTYRQLNEKANQVARLLREKGVKPDTLVGIMMERSSDMIAAILGVLKAGGAYLPIDPEYPPERMRYMAFDSEVKVIISDVPLAEELTAESIELIHMDDERIAGQDRSDIDNVNQSGDLAYVIYTSGSTGKPKGVMIEHQSLINLCSWHQSCFEVGQNDNSSIYASISFDAFVWELFPYITAGATVHVLNQETRLDVEKLNRYFHDHHITISFLPTPVCEQFTALDNHSLRTLLTGGDKLNVFKEKSYQIVNNYGPTENTVVATSFPIDKSHQNIPIGKPIDNVKVYILNKDLQLCPLGASGELCIAGEGLARGYVNRPELTREKFIGNPFVPGERMYRTGDLAKMLPDGNIQFLGRVDQQVKIRGYRIEPGEIENRLLKYEKIEEAAVIAREDGDHDPYLCAYVTVKKEVEPEKIRAFLKKSLPDYMIPQYFVQLDGLPLTVNGKVDKKSLPVPERSVTMDRRYEAPRDQMEEKLVSIWEEALGINKIGINSHFFEAGGHSLKAAALVSTIHKELNVKLPLRQIFETPTIKGLRDISVRRRKCFYIDRKTEEKPYYRLSSAQKRLYILSQTGSHVAYNMPFAMTLEGDFDIRRFENTLKNMVKRHESFRTSFVMIDGEVMQQIEKEIDFQVAYSDIGKESAEEKIKSFIRPFHLEKAPLLRAEVVKLNEREHLLMFDMHHIISDGVSTDIFIQELGALYEGKSLKPFHIQYKDYAEWENSHARSEELKRQEEYWLKTYKGDIPVLDLPIDHKRPLTKSSEGDTVTAAIESETFRKLQHMAKENGVTMYMLLLAGYTALLSKYTGQEDIIVGTPAAGRNHEDIQHLIGMFVNTLAIRNHPEGKKTFRDYLQEVKENTLQAYENQDYPFEELVEKVNIKRDMARNPLFDTMLVYHNTDVKPFEAEGLRSRLVEIKRGISKFDITVTASEAADGLRLEVEYSTTLFNKERMERLSEHLISLLEQAADHPDIAINQIDVLTKGERHRVLYDFNRTDGVFCKEMTIPELFEKQAEKTPDHPAVAFGDETISYRELNERANSLAFTLRQKGVGPDVIAGILTERSIEMIVGIMGILKAGGAYLPIDPAYPQERISYIVKDSDVSVLCAAGDVDPGEAYTGDIIRIDQTGQNDHVENLKHDIKPQHLAYVIYTSGSTGKPKGVMIEHHSVNNLVHGLNERIYQHLDAHLNVALVAPYIFDASVKQIFAALLFGHTLCIVPRETAWDAMSLIEYYSKNNINVSDMTPAHLNMLAYVDKTELEFDVKELIVGGDALTPDVIGGLFHKFPNLSCNITNVYGPTECCVDAASHQIESGKVPQTPSIPIGRPLLNTSIYIVDKELRPLPVGIAGELCIAGEGVARGYVNRPELTAEKFVDHPFEPGKKMYKTGDLAMWLPDGQIEFLGRADHQVKIRGYRIELGEVEQQLLTHEKIKEAAVIAGKDQNGNSYLCAYIASDKELPAADVRQFLEREMPDYMIPSYFVKLDRLPRTPSGKVDRSALPEADGNVNVMEGTGYDPPRNEIERKLVQVWREILGAEDIGISHHFFAAGGDSIKALQIVSRLAKMNLKLEMKALFANPKIKDLSRFITEETRHRKHNKPVTGETELLPIQKRYFANNKEELDHFNQSFMLFRKDGYDENIVRTAFNKILEQHDALRMIYEEKDGDIIQYNRGYRENLFDLDVYDVRGFDSQEEKVFELATGIQKKSSIRKGKLVHLGIFRADEGDHLLIAIHHLVVDGVSWRILFEDFETLYLQALKGEPLDIGYKTDSYQEFARQLKKYAQSRRLLKEREYWQKALEADVPFIPAEKLERDTFEHSATLSIRIGPDVTAKLLRNAFKAYNTEINDILLTALIAAVRDITGENKLKVMMEGHGREDILDGVDITRTIGWFTTVYPVFIDLGEEKEISQNIKMVKEALRKIPNKGIGYGVLKYMTEELQKIQTQAPLSFNYFGEMNNDMNRKVFSQSPFSPGESIGGKIVRHCAIEMNAISLNGELTIYTTFNQDQYQTSTIEQLNQSFKENLEKIVDHCVDKEGSDMTPSDYGDVSLGLEELELIKDKYSAFQIEKIYPLANMQKGMLFHNAMDQTSGAYFQQIVIKLKGRVHPDILEESFHEIVKRHEILRASFEYEITAEPRQIIARDRKTPFTSIDLTGENRTRQHRFIETYLKEDQEKGFDLSSEALMRVCLIKMSDESYRLIWSHHHILLDGWCLGIVLSELFSLYGKIMKGESRRLKEPKPYGDYIKWLEKQDQEEAVAYWKDYLKGYESRSELPAFNRGATSEEYCGKEKVISFSKELTTKITRIAKQHHVTINTVLQGIWGMILAKYKNTDEVVFGTVVSGREAPVDGIEEMVGLFIHTIPTRISFEGARSFKEVLKKTQAESIESNRYSYMNLSEIQVLSEMKRELITHVMAFQNYAFDEELFRSQSGETGFELEGVHGKERTNYNFNLTGVLEDEQLKLKLTFNENVYDNTIIETLEKHIITVAEQVAEDETQTLRDINLVSKEEQHRILHTFNDTKTGYPKDKPLHELFEEQAMKTPDHTALVFGAQRMTYRELNEKANQTARLLREKGIGRGSIAAIIADRSFEMIIGIIGILKAGGTYLPIDPETPRDRIDYMLKNSGAALLVTTDSLLKPFDIKTVDLCSDELHLLSEENLPRVNRSSDTAYIVYTSGSTGTPKGVVIPHYSAARVVKNTNYIDITGNDVILQLSNYSFDGSVFDIFGALLNGASLVLIEKETVLNTHELAEVIKKEQVSVMFITTALFNTLADINIGCLAKLRKILFGGERASIPHVRKVLDHVGRDKLIHVYGPTESTVYATYYFINEIDDEAETIPIGSPLANTSVLIMDEAGKLLPIGVPGELCIAGDGLSKGYLNREELTAEKFIPHPFIPGERLYKTGDLAKWLPDGNIEFIGRIDHQVKIRGFRIELGEIESRLEMHEDINETIVTVREDEESRPYICAYITANREISLDELKGFLGEKLPDYMIPAYFVKMDKLPLTKNGKVDRKALPEPDRSAGTEAEYEAPRNYVEQRIISILEDVLGTERMGISCHFFDKGGNSLKAMQAVHSINKTFGIDMRISTFFKHPTAKSLARFVLTAEAESAVSEEYAEEEV.

The interval 39 to 612 is domain 1 (isoleucine-activating); the sequence is LHELFEEQAM…IKELSAFIEA (574 aa). Basic and acidic residues predominate over residues 519–531; sequence VDRKALPEPDRTA. The disordered stretch occupies residues 519-542; sequence VDRKALPEPDRTAGAENEYEAPRN. The Carrier 1 domain maps to 539 to 614; that stretch reads APRNETEEKL…ELSAFIEANH (76 aa). Serine 574 is subject to O-(pantetheine 4'-phosphoryl)serine. The segment at 621 to 1037 is cyclization; sequence TLVTRAADPE…ITWDYVEQIF (417 aa). Positions 1109-1648 are domain 2 (cysteine-activating); the sequence is HHDEVMTYQE…FKNDTIIALD (540 aa). 4 consecutive Carrier domains span residues 1580–1655, 2616–2691, 3659–3733, and 5166–5241; these read LPEN…KNRE, APRD…VRRR, PPRN…TEET, and APRN…LTAE. An O-(pantetheine 4'-phosphoryl)serine mark is found at serine 1615, serine 2651, serine 3694, and serine 5201. The interval 2124 to 2689 is domain 3 (leucine-activating); that stretch reads GKAIHQLFEE…IKGLRDISVR (566 aa). Residues 3164-3732 form a domain 4 (glutamine-activating) region; that stretch reads DHPAVAFGDE…KDLSRFITEE (569 aa). A domain 5 (isoleucine-activating) region spans residues 4668–5249; it reads LHELFEEQAM…AEAESAVSEE (582 aa).

This sequence belongs to the ATP-dependent AMP-binding enzyme family. As to quaternary structure, large multienzyme complex of BA1, BA2 and BA3. Pantetheine 4'-phosphate is required as a cofactor.

The enzyme catalyses L-glutamate = D-glutamate. It functions in the pathway antibiotic biosynthesis; bacitracin biosynthesis. Its function is as follows. Activates five amino acids, incorporates two D-amino acids, releases and cyclizes the mature bacitracin. This chain is Bacitracin synthase 1 (bacA), found in Bacillus licheniformis.